The primary structure comprises 88 residues: Large ribosomal subunit protein bL27 (88 aa).

The tract at residues 1 to 24 is disordered; sequence MAHKKGTGSTRNGRDSNSKRLGVK.

Belongs to the bacterial ribosomal protein bL27 family.

The chain is Large ribosomal subunit protein bL27 from Synechococcus sp. (strain CC9311).